A 625-amino-acid polypeptide reads, in one-letter code: Dual specificity protein phosphatase 8 (625 aa).

Positions 23–138 (GPGGPLVIDS…FSSCFPGLCE (116 aa)) constitute a Rhodanese domain. A Tyrosine-protein phosphatase domain is found at 160-302 (GLTRILPHLY…LLEYERSLKL (143 aa)). Residue cysteine 246 is the Phosphocysteine intermediate of the active site. The tract at residues 306 to 586 (LQGDPGTPSG…PAPETQFKRR (281 aa)) is disordered. The segment covering 380 to 389 (SSDRLQDTNR) has biased composition (basic and acidic residues). The segment covering 431-448 (AALGLSSPSPDSPDAAPE) has biased composition (low complexity). Positions 555-570 (DLRRREAARAEPRDAR) are enriched in basic and acidic residues.

This sequence belongs to the protein-tyrosine phosphatase family. Non-receptor class dual specificity subfamily. In terms of assembly, monomer. In terms of tissue distribution, abundant in brain, heart and skeletal muscle.

The protein localises to the cytoplasm. Its subcellular location is the nucleus. The catalysed reaction is O-phospho-L-tyrosyl-[protein] + H2O = L-tyrosyl-[protein] + phosphate. It carries out the reaction O-phospho-L-seryl-[protein] + H2O = L-seryl-[protein] + phosphate. It catalyses the reaction O-phospho-L-threonyl-[protein] + H2O = L-threonyl-[protein] + phosphate. Functionally, has phosphatase activity with synthetic phosphatase substrates and negatively regulates mitogen-activated protein kinase activity, presumably by catalysing their dephosphorylation. Expected to display protein phosphatase activity toward phosphotyrosine, phosphoserine and phosphothreonine residues. The sequence is that of Dual specificity protein phosphatase 8 (DUSP8) from Homo sapiens (Human).